The primary structure comprises 97 residues: Defensin-like protein 196 (97 aa).

Positions 1 to 28 are cleaved as a signal peptide; it reads MAKMSALSIFAIFIILVLVIFEIPEIEA. 4 cysteine pairs are disulfide-bonded: cysteine 33-cysteine 85, cysteine 46-cysteine 70, cysteine 55-cysteine 80, and cysteine 59-cysteine 82.

Belongs to the DEFL family. Protease inhibitor I18 (RTI/MTI-2) subfamily.

It is found in the secreted. This is Defensin-like protein 196 (ATTI4) from Arabidopsis thaliana (Mouse-ear cress).